Reading from the N-terminus, the 215-residue chain is MSKIYDWFEERLEIQAIADDITSKYVPPHVNIFYCLGGITLTCFLVQVATGFAMTFYYRPTVTEAFASVQYIMTETNFGWLIRSVHRWSASMMVLMMILHVFRVYLTGGFKKPRELTWVTGVVLAVLTASFGVTGYSLPWDQIGYWAVKIVTGVPEAIPVIGSPLVELLRGSASVGQSTLTRFYSLHTFVLPLLTAVFMLMHFLMIRKQGISGPL.

Residues 32–52 (IFYCLGGITLTCFLVQVATGF) traverse the membrane as a helical segment. Cys35 lines the heme c pocket. Positions 86 and 100 each coordinate heme b. 3 consecutive transmembrane segments (helical) span residues 90 to 110 (ASMM…TGGF), 116 to 136 (LTWV…VTGY), and 186 to 206 (LHTF…FLMI). Residues His187 and His202 each coordinate heme b.

Belongs to the cytochrome b family. PetB subfamily. In terms of assembly, the 4 large subunits of the cytochrome b6-f complex are cytochrome b6, subunit IV (17 kDa polypeptide, PetD), cytochrome f and the Rieske protein, while the 4 small subunits are PetG, PetL, PetM and PetN. The complex functions as a dimer. The cofactor is heme b. Requires heme c as cofactor.

Its subcellular location is the plastid. It localises to the chloroplast thylakoid membrane. Component of the cytochrome b6-f complex, which mediates electron transfer between photosystem II (PSII) and photosystem I (PSI), cyclic electron flow around PSI, and state transitions. The chain is Cytochrome b6 from Morus indica (Mulberry).